Consider the following 339-residue polypeptide: MYSIYDFKYPSDWIEPTADDKCIYDCYKEVINYKLLDENKQTFQYYYGTLSSTINFYPLCNYEQLVIACRFLTVGYLIDDFLESNLVDSETSNLMSKKIENILIDGEYLDQSNISNIEKYTMFFRGKARQFVGDKINIFNQFIKFFVEWINSINPFNKAINLNNYDSYNFFKKVNSGTYVTLSMAMLLNPNTKVDTNIWMNPRFERFVCNGAYQMSAFNDCASYAKEVRSNCHLTNPLYFLQKEIGSFDQVYKLILNFNNKIVNEICKDEELLLKECPDDQKDDLKYLTRSMKLILGGNYSWSLKCTRFNDIDSPFIEQRSINPDVIAYENIVDKIIKL.

Residues 79-84 (DDFLES) carry the DDxx(x)D/E motif motif. Positions 219–227 (NDCASYAKE) match the NDxxSxxxD/E motif motif.

It belongs to the terpene synthase family.

The enzyme catalyses (2E,6E)-farnesyl diphosphate = (-)-beta-barbatene + diphosphate. Functionally, terpene synthase that converts its substrate farnesyl diphosphate (FPP) into the sesquiterpene beta-barbatene. The sequence is that of Terpene synthase 7 from Dictyostelium discoideum (Social amoeba).